Here is a 168-residue protein sequence, read N- to C-terminus: Photosystem I assembly protein Ycf3 (168 aa).

3 TPR repeats span residues 35 to 68, 72 to 105, and 120 to 153; these read AFTY…EIDP, SYIL…NPSL, and GEQA…APSN.

Belongs to the Ycf3 family.

It localises to the plastid. The protein resides in the chloroplast thylakoid membrane. In terms of biological role, essential for the assembly of the photosystem I (PSI) complex. May act as a chaperone-like factor to guide the assembly of the PSI subunits. This chain is Photosystem I assembly protein Ycf3, found in Physcomitrium patens (Spreading-leaved earth moss).